The following is a 150-amino-acid chain: FAD synthase (150 aa).

ATP-binding positions include 20–21 (TF), 25–28 (HPGH), and aspartate 103.

This sequence belongs to the archaeal FAD synthase family. Homodimer. A divalent metal cation is required as a cofactor.

The enzyme catalyses FMN + ATP + H(+) = FAD + diphosphate. It participates in cofactor biosynthesis; FAD biosynthesis; FAD from FMN: step 1/1. In terms of biological role, catalyzes the transfer of the AMP portion of ATP to flavin mononucleotide (FMN) to produce flavin adenine dinucleotide (FAD) coenzyme. The polypeptide is FAD synthase (Methanohalobium evestigatum (strain ATCC BAA-1072 / DSM 3721 / NBRC 107634 / OCM 161 / Z-7303)).